The following is a 256-amino-acid chain: 5-keto-4-deoxy-D-glucarate aldolase (256 aa).

H50 serves as the catalytic Proton acceptor. Residue Q151 participates in substrate binding. Position 153 (E153) interacts with Mg(2+). Substrate-binding residues include S178 and D179. D179 contributes to the Mg(2+) binding site.

Belongs to the HpcH/HpaI aldolase family. KDGluc aldolase subfamily. As to quaternary structure, homohexamer; trimer of dimers. Mg(2+) serves as cofactor.

The catalysed reaction is 5-dehydro-4-deoxy-D-glucarate = 2-hydroxy-3-oxopropanoate + pyruvate. It carries out the reaction 2-dehydro-3-deoxy-D-glucarate = 2-hydroxy-3-oxopropanoate + pyruvate. It functions in the pathway carbohydrate acid metabolism; galactarate degradation; D-glycerate from galactarate: step 2/3. Catalyzes the reversible retro-aldol cleavage of both 5-keto-4-deoxy-D-glucarate and 2-keto-3-deoxy-D-glucarate to pyruvate and tartronic semialdehyde. This chain is 5-keto-4-deoxy-D-glucarate aldolase, found in Salmonella arizonae (strain ATCC BAA-731 / CDC346-86 / RSK2980).